A 408-amino-acid polypeptide reads, in one-letter code: G patch domain-containing protein 4 (408 aa).

N-acetylmethionine is present on methionine 1. At threonine 4 the chain carries Phosphothreonine. The G-patch domain occupies glycine 11–alanine 57. A Glycyl lysine isopeptide (Lys-Gly) (interchain with G-Cter in SUMO2) cross-link involves residue lysine 46. Phosphothreonine is present on threonine 116. 2 disordered regions span residues threonine 116–asparagine 141 and glycine 187–aspartate 408. Phosphoserine is present on residues serine 128 and serine 130. Basic and acidic residues-rich tracts occupy residues arginine 222–arginine 236, histidine 245–threonine 257, and leucine 274–serine 283. The segment covering glutamate 340 to leucine 354 has biased composition (acidic residues). A compositionally biased stretch (basic and acidic residues) spans glycine 358–arginine 372. Basic residues predominate over residues lysine 398–aspartate 408.

This is G patch domain-containing protein 4 (GPATCH4) from Bos taurus (Bovine).